The sequence spans 595 residues: Aspartate--tRNA(Asp/Asn) ligase (595 aa).

Position 178 (Glu178) interacts with L-aspartate. Positions 202–205 (QLFK) are aspartate. L-aspartate is bound at residue Arg224. ATP is bound by residues 224–226 (RDE) and Gln233. His458 provides a ligand contact to L-aspartate. Position 488 (Glu488) interacts with ATP. Arg495 contributes to the L-aspartate binding site. 540–543 (GLDR) serves as a coordination point for ATP.

This sequence belongs to the class-II aminoacyl-tRNA synthetase family. Type 1 subfamily. As to quaternary structure, homodimer.

Its subcellular location is the cytoplasm. It carries out the reaction tRNA(Asx) + L-aspartate + ATP = L-aspartyl-tRNA(Asx) + AMP + diphosphate. Aspartyl-tRNA synthetase with relaxed tRNA specificity since it is able to aspartylate not only its cognate tRNA(Asp) but also tRNA(Asn). Reaction proceeds in two steps: L-aspartate is first activated by ATP to form Asp-AMP and then transferred to the acceptor end of tRNA(Asp/Asn). The sequence is that of Aspartate--tRNA(Asp/Asn) ligase from Trichodesmium erythraeum (strain IMS101).